Consider the following 604-residue polypeptide: Elongation factor 4 (604 aa).

Positions 10 to 191 constitute a tr-type G domain; sequence KNIRNFSIIA…KIITTIPAPS (182 aa). GTP is bound by residues 22 to 27 and 138 to 141; these read DHGKST and NKID.

This sequence belongs to the TRAFAC class translation factor GTPase superfamily. Classic translation factor GTPase family. LepA subfamily.

Its subcellular location is the cell inner membrane. It catalyses the reaction GTP + H2O = GDP + phosphate + H(+). Required for accurate and efficient protein synthesis under certain stress conditions. May act as a fidelity factor of the translation reaction, by catalyzing a one-codon backward translocation of tRNAs on improperly translocated ribosomes. Back-translocation proceeds from a post-translocation (POST) complex to a pre-translocation (PRE) complex, thus giving elongation factor G a second chance to translocate the tRNAs correctly. Binds to ribosomes in a GTP-dependent manner. The sequence is that of Elongation factor 4 from Helicobacter acinonychis (strain Sheeba).